The primary structure comprises 425 residues: Synaptotagmin-4 (425 aa).

The Vesicular portion of the chain corresponds to 1 to 16 (MAPITTSRVEFDEIPT). The helical transmembrane segment at 17 to 37 (VVGIFSAFGLVFTVSLFAWIC) threads the bilayer. The Cytoplasmic portion of the chain corresponds to 38–425 (CQRRSAKSNK…IAKWHMLCDG (388 aa)). The interval 127–147 (TETEKEANSPESLKSSTSLTS) is disordered. Position 135 is a phosphoserine; by MAPK8 (Ser-135). The span at 137 to 146 (ESLKSSTSLT) shows a compositional bias: low complexity. C2 domains lie at 153 to 274 (KLGT…MLMT) and 287 to 420 (GRGE…AKWH). Positions 246, 249, and 252 each coordinate Ca(2+).

This sequence belongs to the synaptotagmin family. As to quaternary structure, interacts with KIF1A; the interaction increases in presence of calcium and decreases when SYT4 is phosphorylated at Ser-135. Ca(2+) is required as a cofactor. Phosphorylation at Ser-135 by MAPK8/JNK1 reduces interaction with KIF1A and neuronal dense core vesicles mobility. Expressed in many regions of the nervous system but is undetectable in extra neural tissues.

It localises to the cytoplasmic vesicle. Its subcellular location is the secretory vesicle. The protein resides in the neuronal dense core vesicle membrane. Synaptotagmin family member which does not bind Ca(2+). Plays a role in dendrite formation by melanocytes. Functionally, synaptotagmin family member which does not bind Ca(2+). Involved in neuronal dense core vesicles (DCVs) mobility through its interaction with KIF1A. Upon increased neuronal activity, phosphorylation by MAPK8/JNK1 destabilizes the interaction with KIF1A and captures DCVs to synapses. Plays a role in dendrite formation by melanocytes. This Mus musculus (Mouse) protein is Synaptotagmin-4 (Syt4).